Consider the following 292-residue polypeptide: Non-homologous end joining protein Ku (292 aa).

Residues 12 to 196 form the Ku domain; it reads KLSLVTCPVV…KITKDMVELA (185 aa). The disordered stretch occupies residues 231 to 292; it reads KPIKLPEPEE…RSAARQRKAG (62 aa). Residues 271–292 show a composition bias toward basic residues; it reads APAHRRPAKKAHRSAARQRKAG.

The protein belongs to the prokaryotic Ku family. As to quaternary structure, homodimer. Interacts with LigD.

Functionally, with LigD forms a non-homologous end joining (NHEJ) DNA repair enzyme, which repairs dsDNA breaks with reduced fidelity. Binds linear dsDNA with 5'- and 3'- overhangs but not closed circular dsDNA nor ssDNA. Recruits and stimulates the ligase activity of LigD. The polypeptide is Non-homologous end joining protein Ku (Bradyrhizobium sp. (strain ORS 278)).